The primary structure comprises 315 residues: Peroxidase 1 (315 aa).

Residues 1-21 (MASSSYTSLLVLVALVTAASA) form the signal peptide. A Pyrrolidone carboxylic acid modification is found at Q22. 4 disulfides stabilise this stretch: C32-C107, C65-C70, C113-C310, and C193-C219. H63 (proton acceptor) is an active-site residue. Ca(2+) is bound by residues D64, V67, G69, D71, and S73. Residue P155 coordinates substrate. N-linked (GlcNAc...) asparagine glycosylation occurs at N158. H186 contributes to the heme b binding site. T187 is a binding site for Ca(2+). Ca(2+) is bound by residues D234, T237, and D242. N-linked (GlcNAc...) asparagine glycosylation is present at N265.

This sequence belongs to the peroxidase family. Classical plant (class III) peroxidase subfamily. The cofactor is Ca(2+). It depends on heme b as a cofactor.

The protein resides in the secreted. The enzyme catalyses 2 a phenolic donor + H2O2 = 2 a phenolic radical donor + 2 H2O. In terms of biological role, removal of H(2)O(2), oxidation of toxic reductants, biosynthesis and degradation of lignin, suberization, auxin catabolism, response to environmental stresses such as wounding, pathogen attack and oxidative stress. These functions might be dependent on each isozyme/isoform in each plant tissue. Functionally, involved in defense response to powdery meldew fungus. The chain is Peroxidase 1 from Hordeum vulgare (Barley).